Reading from the N-terminus, the 619-residue chain is Telomere repeat-binding protein 3 (619 aa).

The 80-residue stretch at 324–403 (VKLSIKSFRI…LDNLGFTLEP (80 aa)) folds into the Ubiquitin-like domain. In terms of domain architecture, HTH myb-type spans 504 to 563 (AQRRTRRPFSVTEVEALVQAVEELGTGRWRDVKLRAFEDADHRTYVDLKDKWKTLVHTAS). The segment at residues 532–559 (WRDVKLRAFEDADHRTYVDLKDKWKTLV) is a DNA-binding region (H-T-H motif). A disordered region spans residues 593–619 (QGKHQARGASKDPDMNRGGAFESGVSV).

As to quaternary structure, homodimer and heterodimer with TRP1. In terms of tissue distribution, expressed ubiquitously. Highest expression in flowers and roots.

It localises to the nucleus. Binds specifically to the plant telomeric double-stranded DNA sequences. At least 2 repeats of telomeric sequences are required for binding. Induces DNA bending. The chain is Telomere repeat-binding protein 3 (TRP3) from Arabidopsis thaliana (Mouse-ear cress).